We begin with the raw amino-acid sequence, 439 residues long: Protein ABHD8 (439 aa).

Disordered regions lie at residues 54–75 (HAGP…PGVK) and 122–148 (ELAE…RPKR). The span at 58–67 (APIPTPPPPP) shows a compositional bias: pro residues. Residues 138-148 (GRRRRPRRPKR) show a composition bias toward basic residues. Residues 169–271 (VLFFIHGVGG…HKVIMINGGG (103 aa)) enclose the AB hydrolase-1 domain. Catalysis depends on charge relay system residues Ser244, Asp362, and His390. The segment at 415–439 (EAEPKLEPKPKPQLLQPEPAPGEEK) is disordered.

It belongs to the AB hydrolase superfamily. As to quaternary structure, interacts with NLRP3 (via NACHT and LLR domains); this interaction is enhanced in the presence of NLRP3 inflammasome inducers, such as ATP, nigericin, silica, or alum. Interacts with ZDHHC12.

It is found in the cytoplasm. Functionally, negatively regulates NLRP3-driven inflammation. Promotes NLRP3 degradation through the chaperone-mediated autophagy (CMA) pathway, hence attenuating inflammasome activation and IL1B secretion. Acts by recruiting palmitoyltransferase ZDHHC12 to NLRP3, facilitating NLRP3 palmitoylation and subsequent degradation. The sequence is that of Protein ABHD8 from Mus musculus (Mouse).